The sequence spans 683 residues: MSTNSRQILVTCALPYANGPIHLGHMLEHIQADIWVRFQRMRGNEIYFVCADDAHGTPIMLKADQMGVKPEQLIADVQQKHMADFSGFNISFDNYHSTHSDENRELVEAIYHKLKQNGFIKTRIISQLFDPEKAMFLPDRFVKGTCPKCKAEDQYGDNCEVCSATYSPIELISPRSTVSGATPVLKESEHFFFDLPAFESMLTEWIRSGSLQQEVANKMQEWFEAGLQQWDISRDAPYFGFKIPNTDNKYFYVWLDAPIGYMASFKNLCGKKSGIDFDSFWSKESHAELYHFIGKDIMYFHSLFWPAMLDGASLRKPNNIFVHGYVTVNGEKMSKSRGTFIQAATYLKYLDPECLRYYYAAKLGSRIDDLDLNLDDFVQRVNTDLVNKLVNLASRNASFIQKRFDGKLADKLDDKMLFDEFIAQSELIADYYENREFGKAIREIMALTDKANKYVDEKAPWVIAKDESRTDELQQVCSMGIELFRVLIGYLKPVLPNLAARAEAFLNTQLTWENVASPLLDHQIAPFKPLFSRLDMKKIEEMIEASKIENAKANQTAGKSAVENKAFSEFEPIEESITIDDFFKVDLRVAKVLKCEAVPESNKLLKFILDIGNETRQVFSGIKAAYGKPEDLEGRFVIMVANLAPRKMKFGMSEGMILSAGNGGADLYLLDVDAGAKAGQRVK.

The 'HIGH' region signature appears at 15–25 (PYANGPIHLGH). Cys146, Cys149, Cys159, and Cys162 together coordinate Zn(2+). The short motif at 332–336 (KMSKS) is the 'KMSKS' region element. Residue Lys335 participates in ATP binding. The tRNA-binding domain occupies 581-683 (DFFKVDLRVA…AGAKAGQRVK (103 aa)).

This sequence belongs to the class-I aminoacyl-tRNA synthetase family. MetG type 1 subfamily. As to quaternary structure, homodimer. It depends on Zn(2+) as a cofactor.

Its subcellular location is the cytoplasm. The enzyme catalyses tRNA(Met) + L-methionine + ATP = L-methionyl-tRNA(Met) + AMP + diphosphate. Functionally, is required not only for elongation of protein synthesis but also for the initiation of all mRNA translation through initiator tRNA(fMet) aminoacylation. This Histophilus somni (strain 129Pt) (Haemophilus somnus) protein is Methionine--tRNA ligase.